The chain runs to 204 residues: Large ribosomal subunit protein uL4 (204 aa).

A disordered region spans residues 44–76 (RAGTHRTKGMGEISGTTKKPYRQKGTGSARQGS).

This sequence belongs to the universal ribosomal protein uL4 family. As to quaternary structure, part of the 50S ribosomal subunit.

One of the primary rRNA binding proteins, this protein initially binds near the 5'-end of the 23S rRNA. It is important during the early stages of 50S assembly. It makes multiple contacts with different domains of the 23S rRNA in the assembled 50S subunit and ribosome. In terms of biological role, forms part of the polypeptide exit tunnel. This is Large ribosomal subunit protein uL4 from Gluconobacter oxydans (strain 621H) (Gluconobacter suboxydans).